Consider the following 128-residue polypeptide: Large ribosomal subunit protein eL22 (128 aa).

Belongs to the eukaryotic ribosomal protein eL22 family. Component of the large ribosomal subunit.

Its subcellular location is the cytoplasm. Functionally, component of the large ribosomal subunit. The ribosome is a large ribonucleoprotein complex responsible for the synthesis of proteins in the cell. This chain is Large ribosomal subunit protein eL22 (rpl22), found in Xenopus tropicalis (Western clawed frog).